The chain runs to 256 residues: 5-keto-4-deoxy-D-glucarate aldolase (256 aa).

Histidine 50 functions as the Proton acceptor in the catalytic mechanism. Glutamine 151 lines the substrate pocket. Glutamate 153 serves as a coordination point for Mg(2+). Substrate-binding residues include serine 178 and aspartate 179. A Mg(2+)-binding site is contributed by aspartate 179.

It belongs to the HpcH/HpaI aldolase family. KDGluc aldolase subfamily. Homohexamer; trimer of dimers. The cofactor is Mg(2+).

It catalyses the reaction 5-dehydro-4-deoxy-D-glucarate = 2-hydroxy-3-oxopropanoate + pyruvate. The catalysed reaction is 2-dehydro-3-deoxy-D-glucarate = 2-hydroxy-3-oxopropanoate + pyruvate. Its pathway is carbohydrate acid metabolism; galactarate degradation; D-glycerate from galactarate: step 2/3. Catalyzes the reversible retro-aldol cleavage of both 5-keto-4-deoxy-D-glucarate and 2-keto-3-deoxy-D-glucarate to pyruvate and tartronic semialdehyde. In Salmonella gallinarum (strain 287/91 / NCTC 13346), this protein is 5-keto-4-deoxy-D-glucarate aldolase.